A 393-amino-acid chain; its full sequence is S-adenosylmethionine synthase 2 (393 aa).

Residue Glu-9 participates in Mg(2+) binding. ATP is bound at residue His-15. Residue Glu-43 participates in K(+) binding. Positions 56 and 99 each coordinate L-methionine. Residues 167-169, 235-238, Asp-246, 252-253, Ala-269, Lys-273, and Lys-277 each bind ATP; these read DGK, SGRF, and RK. Asp-246 serves as a coordination point for L-methionine. Residue Lys-277 participates in L-methionine binding.

Belongs to the AdoMet synthase family. Homotetramer. It depends on Mn(2+) as a cofactor. Requires Mg(2+) as cofactor. The cofactor is Co(2+). K(+) serves as cofactor.

Its subcellular location is the cytoplasm. The catalysed reaction is L-methionine + ATP + H2O = S-adenosyl-L-methionine + phosphate + diphosphate. Its pathway is amino-acid biosynthesis; S-adenosyl-L-methionine biosynthesis; S-adenosyl-L-methionine from L-methionine: step 1/1. Catalyzes the formation of S-adenosylmethionine from methionine and ATP. The reaction comprises two steps that are both catalyzed by the same enzyme: formation of S-adenosylmethionine (AdoMet) and triphosphate, and subsequent hydrolysis of the triphosphate. May be involved in the synthesis of betain in response to abiotic stress such as high salinity. The chain is S-adenosylmethionine synthase 2 (SAMS2) from Beta vulgaris (Sugar beet).